We begin with the raw amino-acid sequence, 173 residues long: S-ribosylhomocysteine lyase (173 aa).

Fe cation-binding residues include histidine 54, histidine 58, and cysteine 128.

This sequence belongs to the LuxS family. In terms of assembly, homodimer. Fe cation serves as cofactor.

It carries out the reaction S-(5-deoxy-D-ribos-5-yl)-L-homocysteine = (S)-4,5-dihydroxypentane-2,3-dione + L-homocysteine. Involved in the synthesis of autoinducer 2 (AI-2) which is secreted by bacteria and is used to communicate both the cell density and the metabolic potential of the environment. The regulation of gene expression in response to changes in cell density is called quorum sensing. Catalyzes the transformation of S-ribosylhomocysteine (RHC) to homocysteine (HC) and 4,5-dihydroxy-2,3-pentadione (DPD). In Hydrogenovibrio crunogenus (strain DSM 25203 / XCL-2) (Thiomicrospira crunogena), this protein is S-ribosylhomocysteine lyase.